We begin with the raw amino-acid sequence, 329 residues long: DNA-directed RNA polymerase subunit alpha (329 aa).

Positions 1–235 (MQGSVTEFLK…EQLEAFVDLR (235 aa)) are alpha N-terminal domain (alpha-NTD). Residues 249–329 (FDPILLRPVD…NWPPASIADE (81 aa)) form an alpha C-terminal domain (alpha-CTD) region.

Belongs to the RNA polymerase alpha chain family. As to quaternary structure, homodimer. The RNAP catalytic core consists of 2 alpha, 1 beta, 1 beta' and 1 omega subunit. When a sigma factor is associated with the core the holoenzyme is formed, which can initiate transcription.

The catalysed reaction is RNA(n) + a ribonucleoside 5'-triphosphate = RNA(n+1) + diphosphate. DNA-dependent RNA polymerase catalyzes the transcription of DNA into RNA using the four ribonucleoside triphosphates as substrates. This chain is DNA-directed RNA polymerase subunit alpha, found in Pectobacterium atrosepticum (strain SCRI 1043 / ATCC BAA-672) (Erwinia carotovora subsp. atroseptica).